A 3312-amino-acid polypeptide reads, in one-letter code: Cadherin EGF LAG seven-pass G-type receptor 3 (3312 aa).

Positions 1 to 32 (MMARRPPWRGLGGRSTPILLLLLLSLFPLSQE) are cleaved as a signal peptide. Topologically, residues 33-2540 (ELGGGGHQGW…RLEGDLELLA (2508 aa)) are extracellular. Disordered regions lie at residues 90 to 112 (GRRQ…LGIE), 143 to 199 (GRTG…RKRV), and 212 to 306 (GSKG…EARK). A compositionally biased stretch (low complexity) spans 159 to 173 (SSGVPGSGNSSPLPS). Over residues 290-299 (RPGPRPPGLP) the composition is skewed to pro residues. Cadherin domains are found at residues 326-433 (PQYN…SPVF), 434-545 (EQAQ…APQF), 546-651 (SEKR…IPIF), 652-756 (VSTP…RPEF), 757-858 (TMKE…RPVF), 859-961 (QSAH…APQF), 962-1067 (VASH…APVF), 1068-1169 (PAEE…SPVL), and 1170-1265 (NNFQ…RVVI). The N-linked (GlcNAc...) asparagine glycan is linked to N632. The N-linked (GlcNAc...) asparagine glycan is linked to N847. 4 N-linked (GlcNAc...) asparagine glycosylation sites follow: N1182, N1222, N1317, and N1327. Residues 1375–1433 (DDNVCLREPCENYMKCVSVLRFDSSAPFLASASTLFRPIQPIAGLRCRCPPGFTGDFCE) enclose the EGF-like 1; calcium-binding domain. Intrachain disulfides connect C1379/C1390, C1384/C1421, C1423/C1432, C1439/C1450, C1444/C1459, C1461/C1470, C1479/C1490, C1484/C1500, and C1502/C1513. Residues 1435–1471 (ELDLCYSNPCRNGGACARREGGYTCVCRPRFTGEDCE) enclose the EGF-like 2; calcium-binding domain. An EGF-like 3; calcium-binding domain is found at 1475–1514 (EAGRCVPGVCRNGGTCTDAPNGGFRCQCPAGGAFEGPRCE). The 205-residue stretch at 1515-1719 (VAARSFPPSS…VANNGTMAGC (205 aa)) folds into the Laminin G-like 1 domain. Residues N1649 and N1713 are each glycosylated (N-linked (GlcNAc...) asparagine). 4 disulfide bridges follow: C1693–C1719, C1726–C1737, C1731–C1746, and C1748–C1757. In terms of domain architecture, EGF-like 4; calcium-binding spans 1722-1758 (KLHFCDSGPCKNSGFCSERWGSFSCDCPVGFGGKDCQ). The Laminin G-like 2 domain occupies 1764-1944 (PHHFRGNGTL…SHRVNAEPGC (181 aa)). The N-linked (GlcNAc...) asparagine glycan is linked to N1770. 9 disulfide bridges follow: C1915–C1944, C1950–C1961, C1955–C1970, C1972–C1981, C1985–C1996, C1990–C2008, C2010–C2019, C2027–C2040, and C2042–C2052. The region spanning 1946–1982 (VTNACASGPCPPHADCRDLWQTFSCTCQPGYYGPGCV) is the EGF-like 5; calcium-binding domain. (3R)-3-hydroxyaspartate is present on D1963. Positions 1983-2020 (DACLLNPCQNQGSCRHLPGAPHGYTCDCVGGYFGHHCE) constitute an EGF-like 6; calcium-binding domain. Residues 2021–2053 (HRMDQQCPRGWWGSPTCGPCNCDVHKGFDPNCN) form the EGF-like 7; calcium-binding domain. N-linked (GlcNAc...) asparagine glycosylation occurs at N2053. An EGF-like 8; calcium-binding domain is found at 2055–2090 (TNGQCHCKEFHYRPRGSDSCLPCDCYPVGSTSRSCA). 5 cysteine pairs are disulfide-bonded: C2059–C2074, C2061–C2077, C2079–C2089, C2098–C2107, and C2110–C2122. Residues 2077-2124 (CDCYPVGSTSRSCAPHSGQCPCRPGALGRQCNSCDSPFAEVTASGCRV) enclose the Laminin EGF-like domain. Y2126 carries the post-translational modification Phosphotyrosine. N-linked (GlcNAc...) asparagine glycosylation is found at N2177, N2196, N2386, N2474, and N2506. The interval 2361 to 2399 (THVLLPSQSPRPSPSEVLPTSSSIENSTTSSVVPPPAPP) is disordered. One can recognise a GAIN-B domain in the interval 2368–2530 (QSPRPSPSEV…GVLMDASPRE (163 aa)). Residues 2380–2391 (TSSSIENSTTSS) show a composition bias toward low complexity. Disulfide bonds link C2480–C2512 and C2500–C2514. Residues 2480–2530 (CVQWDPPGLAEQHGVWTARDCELVHRNGSHARCRCSRTGTFGVLMDASPRE) are GPS. The chain crosses the membrane as a helical span at residues 2541–2561 (VFTHVVVAVSVAALVLTAAIL). Over 2562–2572 (LSLRSLKSNVR) the chain is Cytoplasmic. Residues 2573–2593 (GIHANVAAALGVAELLFLLGI) form a helical membrane-spanning segment. Over 2594 to 2601 (HRTHNQLV) the chain is Extracellular. A helical transmembrane segment spans residues 2602 to 2622 (CTAVAILLHYFFLSTFAWLFV). The Cytoplasmic segment spans residues 2623–2643 (QGLHLYRMQVEPRNVDRGAMR). A helical transmembrane segment spans residues 2644–2664 (FYHALGWGVPAVLLGLAVGLD). The Extracellular segment spans residues 2665 to 2681 (PEGYGNPDFCWISVHEP). A helical membrane pass occupies residues 2682–2702 (LIWSFAGPVVLVIVMNGTMFL). At 2703 to 2725 (LAARTSCSTGQREAKKTSALTLR) the chain is on the cytoplasmic side. Residues 2726-2746 (SSFLLLLLVSASWLFGLLAVN) traverse the membrane as a helical segment. The Extracellular segment spans residues 2747–2753 (HSILAFH). A helical transmembrane segment spans residues 2754-2774 (YLHAGLCGLQGLAVLLLFCVL). Topologically, residues 2775–3312 (NADARAAWMP…SEVPRSEGHS (538 aa)) are cytoplasmic. Disordered regions lie at residues 2888-2927 (AGAD…QRPL) and 2978-3006 (TSKD…AQRQ). Acidic residues predominate over residues 2890–2900 (ADSDSDSDLSL). Phosphotyrosine is present on Y3051. Disordered regions lie at residues 3086-3243 (EEAP…TEQL) and 3256-3312 (SALS…EGHS). S3097 bears the Phosphoserine mark. 3 stretches are compositionally biased toward low complexity: residues 3175–3198 (SPQR…SRSS), 3256–3265 (SALSSVQSSS), and 3272–3281 (TTATPSATAS). Residues 3287 to 3300 (TPRSATSHSISELS) show a composition bias toward polar residues.

This sequence belongs to the G-protein coupled receptor 2 family. LN-TM7 subfamily.

It is found in the cell membrane. In terms of biological role, receptor that may have an important role in cell/cell signaling during nervous system formation. In Homo sapiens (Human), this protein is Cadherin EGF LAG seven-pass G-type receptor 3 (CELSR3).